The primary structure comprises 373 residues: Transaldolase (373 aa).

Residue Lys143 is the Schiff-base intermediate with substrate of the active site.

It belongs to the transaldolase family. Type 2 subfamily.

It is found in the cytoplasm. It carries out the reaction D-sedoheptulose 7-phosphate + D-glyceraldehyde 3-phosphate = D-erythrose 4-phosphate + beta-D-fructose 6-phosphate. The protein operates within carbohydrate degradation; pentose phosphate pathway; D-glyceraldehyde 3-phosphate and beta-D-fructose 6-phosphate from D-ribose 5-phosphate and D-xylulose 5-phosphate (non-oxidative stage): step 2/3. Transaldolase is important for the balance of metabolites in the pentose-phosphate pathway. This is Transaldolase (tal) from Mycobacterium bovis (strain ATCC BAA-935 / AF2122/97).